The sequence spans 378 residues: uncharacterized protein (378 aa).

Zn(2+) contacts are provided by Cys-38, His-60, Cys-90, Cys-93, Cys-96, and Cys-104.

It belongs to the zinc-containing alcohol dehydrogenase family. Class-III subfamily. Requires Zn(2+) as cofactor.

This is an uncharacterized protein from Bacillus subtilis (strain 168).